We begin with the raw amino-acid sequence, 469 residues long: UDP-N-acetylmuramoylalanine--D-glutamate ligase (469 aa).

123–129 is an ATP binding site; it reads GTNGKST.

The protein belongs to the MurCDEF family.

It localises to the cytoplasm. The enzyme catalyses UDP-N-acetyl-alpha-D-muramoyl-L-alanine + D-glutamate + ATP = UDP-N-acetyl-alpha-D-muramoyl-L-alanyl-D-glutamate + ADP + phosphate + H(+). It participates in cell wall biogenesis; peptidoglycan biosynthesis. Cell wall formation. Catalyzes the addition of glutamate to the nucleotide precursor UDP-N-acetylmuramoyl-L-alanine (UMA). This chain is UDP-N-acetylmuramoylalanine--D-glutamate ligase, found in Phenylobacterium zucineum (strain HLK1).